Consider the following 400-residue polypeptide: MDRVLHFVLALAVVAILALLVSSDRKKIRIRYVIQLLVIEVLLAWFFLNSDVGLGFVKGFSEMFEKLLGFANEGTNFVFGSMNDQGLAFFFLKVLCPIVFISALIGILQHIRVLPVIIRAIGFLLSKVNGMGKLESFNAVSSLILGQSENFIAYKDILGKISRNRMYTMAATAMSTVSMSIVGAYMTMLEPKYVVAALVLNMFSTFIVLSLINPYRVDASEENIQMSNLHEGQSFFEMLGEYILAGFKVAIIVAAMLIGFIALIAALNALFATVTGWFGYSISFQGILGYIFYPIAWVMGVPSSEALQVGSIMATKLVSNEFVAMMDLQKIASTLSPRAEGIISVFLVSFANFSSIGIIAGAVKGLNEEQGNVVSRFGLKLVYGSTLVSVLSASIAALVL.

Residues 1 to 3 (MDR) lie on the Cytoplasmic side of the membrane. A helical membrane pass occupies residues 4-24 (VLHFVLALAVVAILALLVSSD). Residues 25 to 36 (RKKIRIRYVIQL) are Periplasmic-facing. Residues 37–57 (LVIEVLLAWFFLNSDVGLGFV) form a helical membrane-spanning segment. Topologically, residues 58-86 (KGFSEMFEKLLGFANEGTNFVFGSMNDQG) are cytoplasmic. A helical transmembrane segment spans residues 87–107 (LAFFFLKVLCPIVFISALIGI). Residues 108–168 (LQHIRVLPVI…GKISRNRMYT (61 aa)) are Periplasmic-facing. Residues 169-189 (MAATAMSTVSMSIVGAYMTML) traverse the membrane as a helical segment. Residues 190–192 (EPK) are Cytoplasmic-facing. A helical transmembrane segment spans residues 193–213 (YVVAALVLNMFSTFIVLSLIN). The Periplasmic portion of the chain corresponds to 214 to 250 (PYRVDASEENIQMSNLHEGQSFFEMLGEYILAGFKVA). The chain crosses the membrane as a helical span at residues 251 to 271 (IIVAAMLIGFIALIAALNALF). Over 272-281 (ATVTGWFGYS) the chain is Cytoplasmic. Residues 282–302 (ISFQGILGYIFYPIAWVMGVP) traverse the membrane as a helical segment. Over 303–341 (SSEALQVGSIMATKLVSNEFVAMMDLQKIASTLSPRAEG) the chain is Periplasmic. Residues 342–362 (IISVFLVSFANFSSIGIIAGA) traverse the membrane as a helical segment. Residues 363 to 378 (VKGLNEEQGNVVSRFG) lie on the Cytoplasmic side of the membrane. The helical transmembrane segment at 379–399 (LKLVYGSTLVSVLSASIAALV) threads the bilayer. A topological domain (periplasmic) is located at residue L400.

The protein belongs to the concentrative nucleoside transporter (CNT) (TC 2.A.41) family.

It localises to the cell inner membrane. The catalysed reaction is adenosine(in) + H(+)(in) = adenosine(out) + H(+)(out). The enzyme catalyses uridine(in) + H(+)(in) = uridine(out) + H(+)(out). It catalyses the reaction thymidine(in) + H(+)(in) = thymidine(out) + H(+)(out). It carries out the reaction cytidine(in) + H(+)(in) = cytidine(out) + H(+)(out). The catalysed reaction is 2'-deoxycytidine(in) + H(+)(in) = 2'-deoxycytidine(out) + H(+)(out). Its activity is regulated as follows. Transport is inhibited by the proton uncoupler dinitrophenol. Inhibited by the nucleoside antibiotic showdomycin. Functionally, nucleoside transport protein that can transport adenosine, uridine, thymidine, cytidine and deoxycytidine. Shows weak activity with inosine and xanthosine. Transport is driven by a proton motive force. Does not transport guanosine, deoxyguanosine, hypoxanthine or uracil. Also shows activity with the chemotherapeutic drugs 3'-azido-3'-deoxythymidine (AZT), 2',3'- dideoxycytidine (ddC) and 2'-deoxy-2',2'-difluorocytidine (gemcitabine). The sequence is that of Nucleoside permease NupC from Escherichia coli (strain K12).